The following is a 183-amino-acid chain: Small ribosomal subunit protein bS20c (183 aa).

The N-terminal 68 residues, 1–68 (MAAISMACVS…FQRRGFSVVC (68 aa)), are a transit peptide targeting the chloroplast. The disordered stretch occupies residues 79-99 (AAKRTRQAETRRLRNKARKSE).

As to quaternary structure, component of the chloroplast small ribosomal subunit (SSU). Mature 70S chloroplast ribosomes of higher plants consist of a small (30S) and a large (50S) subunit. The 30S small subunit contains 1 molecule of ribosomal RNA (16S rRNA) and 24 different proteins. The 50S large subunit contains 3 rRNA molecules (23S, 5S and 4.5S rRNA) and 33 different proteins.

It is found in the plastid. Its subcellular location is the chloroplast. Its function is as follows. Component of the chloroplast ribosome (chloro-ribosome), a dedicated translation machinery responsible for the synthesis of chloroplast genome-encoded proteins, including proteins of the transcription and translation machinery and components of the photosynthetic apparatus. The polypeptide is Small ribosomal subunit protein bS20c (RPS20) (Spinacia oleracea (Spinach)).